The sequence spans 328 residues: Ubiquitin carboxyl-terminal hydrolase isozyme L5 (328 aa).

A UCH catalytic domain is found at 7-225 (EWCLMESDPG…IRFNLMAIVS (219 aa)). Residue K47 is modified to N6-succinyllysine. C88 functions as the Nucleophile in the catalytic mechanism. N6-acetyllysine is present on K158. The Proton donor role is filled by H164. An N6-succinyllysine modification is found at K288. Positions 290–318 (NYLPFIMELLKTLAEHQQLIPLVEKAKEK) constitute a ULD domain. Residues 312 to 328 (VEKAKEKQNAKKAQETK) form an interaction with ADRM1 region.

The protein belongs to the peptidase C12 family. As to quaternary structure, component of the 19S (PA700) regulatory complex of the 26S proteasome. Interacts with ADRM1 and NFRKB. Component of the INO80 complex; specifically part of a complex module associated with N-terminus of INO80.

Its subcellular location is the cytoplasm. The protein resides in the nucleus. It catalyses the reaction Thiol-dependent hydrolysis of ester, thioester, amide, peptide and isopeptide bonds formed by the C-terminal Gly of ubiquitin (a 76-residue protein attached to proteins as an intracellular targeting signal).. Activated by ADRM1. Inhibited by interaction with NFRKB. In terms of biological role, protease that specifically cleaves 'Lys-48'-linked polyubiquitin chains. Deubiquitinating enzyme associated with the 19S regulatory subunit of the 26S proteasome. Putative regulatory component of the INO80 complex; however is inactive in the INO80 complex and is activated by a transient interaction of the INO80 complex with the proteasome via ADRM1. This is Ubiquitin carboxyl-terminal hydrolase isozyme L5 (UCHL5) from Bos taurus (Bovine).